The sequence spans 549 residues: Glucose-6-phosphate isomerase (549 aa).

The active-site Proton donor is glutamate 355. Catalysis depends on residues histidine 386 and lysine 514.

This sequence belongs to the GPI family.

Its subcellular location is the cytoplasm. The enzyme catalyses alpha-D-glucose 6-phosphate = beta-D-fructose 6-phosphate. It participates in carbohydrate biosynthesis; gluconeogenesis. It functions in the pathway carbohydrate degradation; glycolysis; D-glyceraldehyde 3-phosphate and glycerone phosphate from D-glucose: step 2/4. Functionally, catalyzes the reversible isomerization of glucose-6-phosphate to fructose-6-phosphate. The sequence is that of Glucose-6-phosphate isomerase from Klebsiella pneumoniae subsp. pneumoniae (strain ATCC 700721 / MGH 78578).